Consider the following 107-residue polypeptide: METIAFRMVLNPGMREEYERRHAQIWPELVDALHNAGVRDYRIFFDPDSNHLFAILTRNSHHTMDELPQLDVMRKWWDYMADIMHTGPDHTPVQQPLEPVFHLNSLS.

Y18 is a binding site for substrate. Residue H22 is the Proton donor of the active site. Residues Y41 and 76–77 (WW) each bind substrate.

Belongs to the rhamnose mutarotase family. Homodimer.

It is found in the cytoplasm. It carries out the reaction alpha-L-rhamnose = beta-L-rhamnose. Its pathway is carbohydrate metabolism; L-rhamnose metabolism. Functionally, involved in the anomeric conversion of L-rhamnose. This chain is L-rhamnose mutarotase, found in Paraburkholderia phytofirmans (strain DSM 17436 / LMG 22146 / PsJN) (Burkholderia phytofirmans).